Reading from the N-terminus, the 308-residue chain is Protoheme IX farnesyltransferase (308 aa).

Transmembrane regions (helical) follow at residues 20 to 40 (VLAYLALTKPRVIELLLVTAI), 53 to 73 (PLLILNTLLGGISAAAGANTF), 102 to 122 (NALVLGLALTAGSFFWLWWTT), 124 to 144 (LLSGLLALATVAFYVFVYTLL), 149 to 169 (TSQNVVWGGAAGCMPVMIGWS), 170 to 190 (AITDTIGWPALAMFAIIFFWT), 227 to 249 (LIYTWLTALSTLVLALATGWLYM), 254 to 276 (VAGAWFLTMAHQLYVGVCAGEPV), and 288 to 308 (YLAVVFCALAVDSVLALPTLF).

It belongs to the UbiA prenyltransferase family. Protoheme IX farnesyltransferase subfamily.

Its subcellular location is the cell membrane. The enzyme catalyses heme b + (2E,6E)-farnesyl diphosphate + H2O = Fe(II)-heme o + diphosphate. It functions in the pathway porphyrin-containing compound metabolism; heme O biosynthesis; heme O from protoheme: step 1/1. Its function is as follows. Converts heme B (protoheme IX) to heme O by substitution of the vinyl group on carbon 2 of heme B porphyrin ring with a hydroxyethyl farnesyl side group. The protein is Protoheme IX farnesyltransferase of Mycobacterium leprae (strain TN).